The chain runs to 681 residues: MMEKGIWKDALIQSTKKLSPKLQVKNPVMLLVYVGAILATSLYFLGFFGISDEKSGYTLAIALILWFTVLFANFAEAIAEGRGRAQADSLKMARKDVLARKLKNVDDKTDVIEVASNDLKKGDIVYVLANEQIPMDGEVIEGAASVDESAITGESAPVIRESGGDRSAVTGGTTLVSDWLVVRVTAVSGESFLDKMIAMVEGASRKKTPNEIALQILLVTLSIIFLAVSATLLPFTEFASKQAGAGSAISITNVIALLVCLAPTTIGALLSSIGIAGMSRLNQANVLAMSGRAIEAAGDVDVLLLDKTGTITLGNRKASEFLPVDGVTEQELADAAQLSSIADETAEGRSIVVLAKERFDIRGRDFAEMHAEFVPFTATTRMSGIDYQENTIRKGAADAVRAYVTANGGTYPKECDAIVSKVAGAGGTPLVVVRNNQVLGVIYLKDIVKNGVKERFLDLRKMGIKTIMITGDNPMTAAAIAAEAGVDDFLAEATPEAKLELIREYQREGHLVAMTGDGTNDAPALAQADVAVAMNTGTQAAKEAGNMVDLDSSPTKLIDIVRIGKQLLMTRGALTTFSVANDLAKYFAIIPVLFYGIFPQLEALNLMGLTSPTSAILSAIIYNAVIIIVLIPLSLKGVKYREMPAGKLLSRNMLIYGLGGLIAPFIAIKLIDMLLTVLGIV.

4 helical membrane-spanning segments follow: residues Leu-30–Ile-50, Leu-59–Ala-79, Ile-216–Thr-236, and Ile-255–Ile-275. Asp-306 functions as the 4-aspartylphosphate intermediate in the catalytic mechanism. ATP-binding positions include Asp-343, Glu-347, Phe-376–Ser-383, and Lys-394. Mg(2+)-binding residues include Asp-517 and Asp-521. Helical transmembrane passes span Phe-587–Met-607, Ala-615–Leu-635, and Leu-661–Val-681.

It belongs to the cation transport ATPase (P-type) (TC 3.A.3) family. Type IA subfamily. In terms of assembly, the system is composed of three essential subunits: KdpA, KdpB and KdpC.

It localises to the cell membrane. The enzyme catalyses K(+)(out) + ATP + H2O = K(+)(in) + ADP + phosphate + H(+). Its function is as follows. Part of the high-affinity ATP-driven potassium transport (or Kdp) system, which catalyzes the hydrolysis of ATP coupled with the electrogenic transport of potassium into the cytoplasm. This subunit is responsible for energy coupling to the transport system and for the release of the potassium ions to the cytoplasm. The polypeptide is Potassium-transporting ATPase ATP-binding subunit (Listeria monocytogenes serovar 1/2a (strain ATCC BAA-679 / EGD-e)).